The primary structure comprises 335 residues: MAHVAEWKKEEVNELKSLIDKYDVIGIVDLLNIPAKQLQEMRKSLHNKAVIRMSKKNLIDLALEDCNASKNNIVDLSEHMEGQVAVIATEMNPFKLYKILEDSKTSAPAKPGAIATDDIVIPEGDTGFEPGPFLGELQQVGIPAKIDKGKIVVSKETVLVEAGEEVSAAVASTLSRMDINPMEVGIDLRAVYEEEAIYTSEVLAIDEEQTLADVQNAFRNAFNLSVNAAIPTEETISTIITLAYTRAINVGVDAAIMTSETSEPIIGLAQAKMLALASEVSGTEGALDDELAEKLSNVAVAAAPVVEETVEEEEEEEEEEDAEEEAAAGLGALFG.

The tract at residues 306-335 is disordered; it reads VEETVEEEEEEEEEEDAEEEAAAGLGALFG. Residues 308 to 326 show a composition bias toward acidic residues; it reads ETVEEEEEEEEEEDAEEEA.

It belongs to the universal ribosomal protein uL10 family. As to quaternary structure, part of the 50S ribosomal subunit. Forms part of the ribosomal stalk which helps the ribosome interact with GTP-bound translation factors. Forms a heptameric L10(L12)2(L12)2(L12)2 complex, where L10 forms an elongated spine to which the L12 dimers bind in a sequential fashion.

Forms part of the ribosomal stalk, playing a central role in the interaction of the ribosome with GTP-bound translation factors. The chain is Large ribosomal subunit protein uL10 from Methanobrevibacter smithii (strain ATCC 35061 / DSM 861 / OCM 144 / PS).